Here is a 509-residue protein sequence, read N- to C-terminus: Probable glycine dehydrogenase (decarboxylating) subunit 2 (509 aa).

Position 278 is an N6-(pyridoxal phosphate)lysine (Lys-278).

Belongs to the GcvP family. C-terminal subunit subfamily. As to quaternary structure, the glycine cleavage system is composed of four proteins: P, T, L and H. In this organism, the P 'protein' is a heterodimer of two subunits. Pyridoxal 5'-phosphate serves as cofactor.

It catalyses the reaction N(6)-[(R)-lipoyl]-L-lysyl-[glycine-cleavage complex H protein] + glycine + H(+) = N(6)-[(R)-S(8)-aminomethyldihydrolipoyl]-L-lysyl-[glycine-cleavage complex H protein] + CO2. Its function is as follows. The glycine cleavage system catalyzes the degradation of glycine. The P protein binds the alpha-amino group of glycine through its pyridoxal phosphate cofactor; CO(2) is released and the remaining methylamine moiety is then transferred to the lipoamide cofactor of the H protein. The protein is Probable glycine dehydrogenase (decarboxylating) subunit 2 of Saccharolobus islandicus (strain Y.N.15.51 / Yellowstone #2) (Sulfolobus islandicus).